A 396-amino-acid polypeptide reads, in one-letter code: Ribosomal RNA large subunit methyltransferase I (396 aa).

Residues serine 2–arginine 81 enclose the PUA domain.

It belongs to the methyltransferase superfamily. RlmI family.

The protein localises to the cytoplasm. The enzyme catalyses cytidine(1962) in 23S rRNA + S-adenosyl-L-methionine = 5-methylcytidine(1962) in 23S rRNA + S-adenosyl-L-homocysteine + H(+). Its function is as follows. Specifically methylates the cytosine at position 1962 (m5C1962) of 23S rRNA. This is Ribosomal RNA large subunit methyltransferase I from Shigella boydii serotype 4 (strain Sb227).